The following is a 1028-amino-acid chain: Serine/threonine-protein kinase fray2 (1028 aa).

Residues 1–67 (MSDDKYHHDK…PKPRKNYPNS (67 aa)) are disordered. Residues 20–54 (KQSTAAALSSSSTLASSSSMTTTTTTTSTTTTAAS) are compositionally biased toward low complexity. The 260-residue stretch at 71-330 (YELKETIGKG…PSKLLEHRFF (260 aa)) folds into the Protein kinase domain. Residues 77–85 (IGKGGSGLV) and Lys100 each bind ATP. The active-site Proton acceptor is Asp195. Thr230 carries the phosphothreonine; by autocatalysis modification. Polar residues predominate over residues 368 to 381 (TSSPQFDTGHSNSA). Disordered regions lie at residues 368–467 (TSSP…STVV), 486–561 (AYHQ…LQQP), and 580–914 (DLIT…IQSK). Low complexity-rich tracts occupy residues 387–419 (PNENNDNNNSSTTTTTTTTTTTNPSNNNNNNNN) and 432–458 (TPSHTPSTSPGSTPSHSRTSTPTSNHT). Polar residues-rich tracts occupy residues 503-518 (IPNHNASSNLGASAHS) and 528-542 (IHPTSSAASTTVVNN). A compositionally biased stretch (low complexity) spans 543-561 (TQQPQTLQPPQQQHQLQQP). Residues 595–616 (IPSSSSHGNIPSLVTTSPKSPL) are compositionally biased toward polar residues. 2 stretches are compositionally biased toward low complexity: residues 617–642 (QHQQQIPQQQQDPAMINSNNSSISSN) and 683–700 (SSRASSLSESSDSTSHTS). Composition is skewed to basic and acidic residues over residues 701 to 714 (SSDEHSSRYESDRK), 728 to 742 (SKRDRERERDRDRSN), 753 to 855 (VSRD…DRSR), and 865 to 893 (SRDSRNKSRDRSSDSDRSRDRSRDRDYKS).

Belongs to the protein kinase superfamily. STE Ser/Thr protein kinase family. STE20 subfamily. It depends on Mn(2+) as a cofactor. Post-translationally, undergoes autophosphorylation in the catalytic domain.

The enzyme catalyses L-seryl-[protein] + ATP = O-phospho-L-seryl-[protein] + ADP + H(+). It catalyses the reaction L-threonyl-[protein] + ATP = O-phospho-L-threonyl-[protein] + ADP + H(+). The polypeptide is Serine/threonine-protein kinase fray2 (Dictyostelium discoideum (Social amoeba)).